The primary structure comprises 466 residues: Asparagine--tRNA ligase (466 aa).

The protein belongs to the class-II aminoacyl-tRNA synthetase family. Homodimer.

The protein localises to the cytoplasm. It carries out the reaction tRNA(Asn) + L-asparagine + ATP = L-asparaginyl-tRNA(Asn) + AMP + diphosphate + H(+). This is Asparagine--tRNA ligase from Vibrio cholerae serotype O1 (strain ATCC 39315 / El Tor Inaba N16961).